The chain runs to 372 residues: L-selectin (372 aa).

Positions 1–28 (MIFPWKCQSTQRDLCNIFKLWGWTMLCC) are cleaved as a signal peptide. A propeptide spanning residues 29–38 (DFLAHHGTDC) is cleaved from the precursor. The Extracellular segment spans residues 39–332 (WTYHYSEKPM…FSMIKEGDYN (294 aa)). The region spanning 55 to 155 (RFCRENYTDL…ACHKLKAALC (101 aa)) is the C-type lectin domain. Cystine bridges form between Cys57-Cys155, Cys128-Cys147, Cys128-Cys160, Cys160-Cys171, Cys165-Cys180, Cys182-Cys191, Cys197-Cys241, Cys227-Cys254, Cys259-Cys303, and Cys289-Cys316. 2 N-linked (GlcNAc...) asparagine glycosylation sites follow: Asn60 and Asn104. Ca(2+)-binding residues include Glu118, Asn120, Glu126, Asn143, and Asp144. In terms of domain architecture, EGF-like spans 156 to 192 (YTASCQPWSCSGHGECVEIINNYTCNCDVGYYGPQCQ). A glycan (N-linked (GlcNAc...) asparagine) is linked at Asn177. Sushi domains lie at 195–256 (IQCE…TCQV) and 257–318 (IQCE…ICQK). Asn216, Asn226, Asn232, Asn246, and Asn271 each carry an N-linked (GlcNAc...) asparagine glycan. The helical transmembrane segment at 333-355 (PLFIPVAVMVTAFSGLAFIIWLA) threads the bilayer. Residues 356–372 (RRLKKGKKSKKSMDDPY) are Cytoplasmic-facing.

It belongs to the selectin/LECAM family. As to quaternary structure, interaction with SELPLG/PSGL1 and PODXL2 is required for promoting recruitment and rolling of leukocytes. This interaction is dependent on the sialyl Lewis X glycan modification of SELPLG and PODXL2, and tyrosine sulfation modifications of SELPLG. Sulfation on 'Tyr-51' of SELPLG is important for L-selectin binding. In terms of processing, N-glycosylated.

It is found in the cell membrane. Its function is as follows. Calcium-dependent lectin that mediates cell adhesion by binding to glycoproteins on neighboring cells. Mediates the adherence of lymphocytes to endothelial cells of high endothelial venules in peripheral lymph nodes. Promotes initial tethering and rolling of leukocytes in endothelia. The polypeptide is L-selectin (SELL) (Pongo pygmaeus (Bornean orangutan)).